Here is a 298-residue protein sequence, read N- to C-terminus: MGVPKQRWTPEEEAALKAGVAKHGPGKWRTILRDSDFSALLRLRSNVDLKDKWRNLSVTAGGYGSREKARMALKKGRRVVPKLTAEPMDVDEKDMDNAHDTVIDVEPLAMAFEPLPFLESPDKSVARLDDLIVEAIRKLNEPSGSNKAVISGYIEDQYWPPADFQYLLSTKLKSLVNSGKLIKVNQKYRIAPSSSLGGISTKVSSSEGMNTENNNVKRLTKPQVVAELEKMKGMTREEAAAFAAKAVAEAEVAMAEAEEAARVAEAAENDAEAAKAFLDAVILSMRNRNAASMILRAC.

The region spanning 1-61 (MGVPKQRWTP…KWRNLSVTAG (61 aa)) is the HTH myb-type domain. The H-T-H motif DNA-binding region spans 28–57 (WRTILRDSDFSALLRLRSNVDLKDKWRNLS). The 69-residue stretch at 124-192 (SVARLDDLIV…KVNQKYRIAP (69 aa)) folds into the H15 domain. The stretch at 237–278 (EEAAAFAAKAVAEAEVAMAEAEEAARVAEAAENDAEAAKAFL) forms a coiled coil.

The protein belongs to the histone H1/H5 family. SMH subfamily. Forms a homodimer and heterodimers.

It localises to the nucleus. The protein localises to the chromosome. It is found in the nucleolus. Its subcellular location is the telomere. In terms of biological role, binds preferentially double-stranded telomeric repeats, but may also bind to the single telomeric strand. This chain is Single myb histone 2 (SMH2), found in Zea mays (Maize).